Here is a 616-residue protein sequence, read N- to C-terminus: Chaperone protein HscA (616 aa).

Belongs to the heat shock protein 70 family.

Functionally, chaperone involved in the maturation of iron-sulfur cluster-containing proteins. Has a low intrinsic ATPase activity which is markedly stimulated by HscB. Involved in the maturation of IscU. This is Chaperone protein HscA from Serratia proteamaculans (strain 568).